A 146-amino-acid polypeptide reads, in one-letter code: Cyanate hydratase (146 aa).

Residues Arg87, Glu90, and Ser113 contribute to the active site.

This sequence belongs to the cyanase family.

The catalysed reaction is cyanate + hydrogencarbonate + 3 H(+) = NH4(+) + 2 CO2. Its function is as follows. Catalyzes the reaction of cyanate with bicarbonate to produce ammonia and carbon dioxide. The sequence is that of Cyanate hydratase from Trichormus variabilis (strain ATCC 29413 / PCC 7937) (Anabaena variabilis).